Here is a 243-residue protein sequence, read N- to C-terminus: CAVP-target protein (243 aa).

The tract at residues 1 to 22 is disordered; sequence PKPPAEAKPAAKPAAPPAAANP. The span at 7–20 shows a compositional bias: low complexity; it reads AKPAAKPAAPPAAA. An IQ domain is found at 35 to 62; the sequence is SAATRIQASFRMHKNRMALKEKSIPKFS. 2 consecutive Ig-like C2-type domains span residues 59-150 and 151-243; these read PKFS…LALE and VPAK…VKVN.

In terms of biological role, this protein is the target of CAVP, which binds to it in a calcium-dependent manner. This is CAVP-target protein from Branchiostoma lanceolatum (Common lancelet).